The following is a 256-amino-acid chain: Protein CUSTOS (256 aa).

The span at 1–19 (MVAPSGAMSDSENSSSSSS) shows a compositional bias: low complexity. 3 disordered regions span residues 1 to 83 (MVAP…TPEF), 127 to 163 (FTSI…QRCR), and 227 to 256 (IQKK…KPEN). S62 carries the post-translational modification Phosphoserine. Residues 63–83 (RRHEVNQHEEDGNDLRTTPEF) show a composition bias toward basic and acidic residues. T80 is subject to Phosphothreonine. S139 is subject to Phosphoserine. The Nucleolar localization signal (NLS) signature appears at 228 to 235 (QKKRKKKA). Residues 228 to 237 (QKKRKKKAKK) are compositionally biased toward basic residues. Residues 246 to 256 (PAECAAAKPEN) show a composition bias toward low complexity.

The protein belongs to the CUSTOS family.

It is found in the nucleus envelope. Functionally, plays a role in the regulation of Wnt signaling pathway during early development. The sequence is that of Protein CUSTOS from Mus musculus (Mouse).